The following is a 784-amino-acid chain: LPS-assembly protein LptD (784 aa).

The N-terminal stretch at 1 to 24 (MKKRIPTLLATMIATALYSQQGLA) is a signal peptide. Cystine bridges form between Cys31–Cys724 and Cys173–Cys725.

The protein belongs to the LptD family. In terms of assembly, component of the lipopolysaccharide transport and assembly complex. Interacts with LptE and LptA. In terms of processing, contains two intramolecular disulfide bonds.

It is found in the cell outer membrane. Its function is as follows. Together with LptE, is involved in the assembly of lipopolysaccharide (LPS) at the surface of the outer membrane. The sequence is that of LPS-assembly protein LptD from Escherichia coli O157:H7.